A 208-amino-acid chain; its full sequence is CASP-like protein 2U9 (208 aa).

The Cytoplasmic portion of the chain corresponds to Met-1 to Lys-27. The chain crosses the membrane as a helical span at residues Ile-28–Met-48. The Extracellular portion of the chain corresponds to Val-49–Gly-87. The chain crosses the membrane as a helical span at residues Ala-88–Leu-108. Residues Thr-109 to Ala-120 are Cytoplasmic-facing. Residues Trp-121–Val-141 traverse the membrane as a helical segment. At Ala-142 to Cys-168 the chain is on the extracellular side. A helical membrane pass occupies residues Phe-169–Val-189. Topologically, residues Ala-190–Lys-208 are cytoplasmic.

The protein belongs to the Casparian strip membrane proteins (CASP) family. Homodimer and heterodimers.

It localises to the cell membrane. The sequence is that of CASP-like protein 2U9 from Selaginella moellendorffii (Spikemoss).